The following is a 382-amino-acid chain: GDP-mannose transporter (382 aa).

At Met-1–Gln-40 the chain is on the cytoplasmic side. The chain crosses the membrane as a helical span at residues Leu-41–Val-61. Topologically, residues Met-62–Asp-71 are lumenal. Residues Phe-72–Thr-92 form a helical membrane-spanning segment. Residues Cys-93–Lys-110 lie on the Cytoplasmic side of the membrane. Residues Lys-111–Ser-127 traverse the membrane as a helical segment. Residues Lys-128–Ser-134 lie on the Lumenal side of the membrane. A helical membrane pass occupies residues Ile-135–Tyr-151. Residues Gly-152–Ser-160 lie on the Cytoplasmic side of the membrane. The chain crosses the membrane as a helical span at residues Val-161 to Ala-182. At Asp-183–Thr-200 the chain is on the lumenal side. Residues Leu-201–Gly-221 traverse the membrane as a helical segment. Topologically, residues Met-222 to Asp-233 are cytoplasmic. The chain crosses the membrane as a helical span at residues Phe-234–Leu-254. At Met-255 to Gly-274 the chain is on the lumenal side. The chain crosses the membrane as a helical span at residues Ile-275–Trp-295. At Cys-296–Thr-303 the chain is on the cytoplasmic side. A helical membrane pass occupies residues Thr-304 to Phe-324. Residues Asp-325 to Pro-327 are Lumenal-facing. A helical membrane pass occupies residues Val-328–Val-348. The Cytoplasmic portion of the chain corresponds to Ala-349 to Ser-382. The tract at residues Lys-358–Ser-382 is disordered. Residues Pro-367–Ser-382 show a composition bias toward polar residues.

Belongs to the TPT transporter family. SLC35D subfamily. Homooligomer.

The protein localises to the golgi apparatus membrane. It localises to the cytoplasmic vesicle membrane. It is found in the endoplasmic reticulum membrane. Its function is as follows. Involved in the import of GDP-mannose from the cytoplasm into the Golgi lumen. This chain is GDP-mannose transporter (gmt1), found in Aspergillus fumigatus (strain CBS 144.89 / FGSC A1163 / CEA10) (Neosartorya fumigata).